Here is a 304-residue protein sequence, read N- to C-terminus: tRNA pseudouridine synthase B (304 aa).

D38 functions as the Nucleophile in the catalytic mechanism.

It belongs to the pseudouridine synthase TruB family. Type 1 subfamily.

The enzyme catalyses uridine(55) in tRNA = pseudouridine(55) in tRNA. Its function is as follows. Responsible for synthesis of pseudouridine from uracil-55 in the psi GC loop of transfer RNAs. The sequence is that of tRNA pseudouridine synthase B from Listeria welshimeri serovar 6b (strain ATCC 35897 / DSM 20650 / CCUG 15529 / CIP 8149 / NCTC 11857 / SLCC 5334 / V8).